The primary structure comprises 373 residues: Dual-specificity RNA methyltransferase RlmN (373 aa).

The active-site Proton acceptor is the Glu-91. The Radical SAM core domain occupies 97-339 (EDDRGTLCIS…TTVRKTRGDD (243 aa)). Cys-104 and Cys-344 form a disulfide bridge. The [4Fe-4S] cluster site is built by Cys-111, Cys-115, and Cys-118. S-adenosyl-L-methionine is bound by residues 165-166 (GE), Ser-197, 219-221 (SLH), and Asn-301. Cys-344 (S-methylcysteine intermediate) is an active-site residue.

This sequence belongs to the radical SAM superfamily. RlmN family. [4Fe-4S] cluster serves as cofactor.

Its subcellular location is the cytoplasm. It catalyses the reaction adenosine(2503) in 23S rRNA + 2 reduced [2Fe-2S]-[ferredoxin] + 2 S-adenosyl-L-methionine = 2-methyladenosine(2503) in 23S rRNA + 5'-deoxyadenosine + L-methionine + 2 oxidized [2Fe-2S]-[ferredoxin] + S-adenosyl-L-homocysteine. The catalysed reaction is adenosine(37) in tRNA + 2 reduced [2Fe-2S]-[ferredoxin] + 2 S-adenosyl-L-methionine = 2-methyladenosine(37) in tRNA + 5'-deoxyadenosine + L-methionine + 2 oxidized [2Fe-2S]-[ferredoxin] + S-adenosyl-L-homocysteine. Functionally, specifically methylates position 2 of adenine 2503 in 23S rRNA and position 2 of adenine 37 in tRNAs. m2A2503 modification seems to play a crucial role in the proofreading step occurring at the peptidyl transferase center and thus would serve to optimize ribosomal fidelity. This is Dual-specificity RNA methyltransferase RlmN from Paracidovorax citrulli (strain AAC00-1) (Acidovorax citrulli).